Here is a 1121-residue protein sequence, read N- to C-terminus: Brassinosteroid LRR receptor kinase BRI1 (1121 aa).

The N-terminal stretch at 1–24 is a signal peptide; sequence MDSLWAAIAALFVAAAVVVRGAAA. The Cys pair 1 signature appears at 54–61; that stretch reads CRFPGAGC. 17 LRR repeats span residues 90–114, 116–142, 144–167, 170–193, 197–221, 223–243, 244–268, 269–292, 294–317, 318–341, 343–367, 369–391, 392–415, 416–439, 441–463, 464–487, and 489–511; these read LGSV…GGAR, GSKL…ALAS, CGGL…GGGG, FAGL…RWMV, VGAV…NCSG, QYLD…ALSD, CRGL…IAGL, TSLN…AFAK, QQLT…VASL, PELQ…LCQD, NSKL…VSNC, SLVS…LGDL, GNLQ…LSRI, QGLE…LAKC, KLNW…LGKL, SYLA…LGDC, and SLVW…LAKQ. An N-linked (GlcNAc...) asparagine glycan is attached at Asn102. Asn151 carries N-linked (GlcNAc...) asparagine glycosylation. A glycan (N-linked (GlcNAc...) asparagine) is linked at Asn218. N-linked (GlcNAc...) asparagine glycans are attached at residues Asn251, Asn275, Asn280, and Asn307. Residues Asn366 and Asn381 are each glycosylated (N-linked (GlcNAc...) asparagine). N-linked (GlcNAc...) asparagine glycosylation is found at Asn473 and Asn501. Brassinolide is bound at residue Tyr525. Residues 541-564 form an LRR 18 repeat; it reads GSLLEFTSIRPDDLSRMPSKKLCN. The N-linked (GlcNAc...) asparagine glycan is linked to Asn564. Brassinolide is bound at residue Tyr569. N-linked (GlcNAc...) asparagine glycosylation is present at Asn580. 4 LRR repeats span residues 580-603, 604-628, 629-651, and 652-676; these read NGSM…ELGD, MFYL…LAEA, KKLA…SFSA, and LSLS…SLAT. N-linked (GlcNAc...) asparagine glycans are attached at residues Asn658, Asn665, and Asn684. The short motif at 689 to 696 is the Cys pair 2 element; it reads CGFPLPPC. The tract at residues 693 to 712 is disordered; the sequence is LPPCDHSSPRSSNDHQSHRR. A helical transmembrane segment spans residues 719 to 739; that stretch reads SIAMGLLFSLFCIIVIIIAIG. Residues 807-1083 form the Protein kinase domain; the sequence is FHIACQIGSG…LKVMAMFKEI (277 aa). Residues 813-821, Lys835, 881-883, 887-890, 933-938, and Asp951 each bind ATP; these read IGSGGFGDV, DYM, SLED, and DMKSSN. Asp933 functions as the Proton acceptor in the catalytic mechanism.

It belongs to the protein kinase superfamily. Ser/Thr protein kinase family. As to quaternary structure, interacts with BIP103 and BIP131. Interacts with BAK1. Interacts with BSK3. Interacts with SERK2. Highly expressed in shoots. Expressed at low levels in roots.

It localises to the cell membrane. The catalysed reaction is L-seryl-[protein] + ATP = O-phospho-L-seryl-[protein] + ADP + H(+). It carries out the reaction L-threonyl-[protein] + ATP = O-phospho-L-threonyl-[protein] + ADP + H(+). Receptor kinase involved brassinosteroid (BR) signal transduction. Regulates, in response to BR binding, a signaling cascade involved in plant development, promotion of cell elongation and flowering. Activates BR signaling by targeting and phosphorylating BSK3, a positive regulator of BR signaling. Forms at the plasma membrane a receptor complex with BAK1 which is activated in response to brassinolide. Phosphorylates BAK1. Phosphorylates REM4.1, which reduces REM4.1 binding affinity to BAK1 and allows the formation and subsequent activation of the BRI1-BAK1 receptor complex. Functions in various growth and developmental processes, such as internode elongation, bending of the lamina joint and skotomorphogenesis. Functions in internode elongation by inducing the formation of the intercalary meristem and the longitudinal elongation of internode cells. Involved in organ development through the control of cell division and elongation. Does not seem essential for organ pattern formation or organ initiation. This Oryza sativa subsp. japonica (Rice) protein is Brassinosteroid LRR receptor kinase BRI1.